The sequence spans 338 residues: CRISPR-associated endonuclease Cas1 (338 aa).

Mn(2+) is bound by residues E155, H220, and E235.

Belongs to the CRISPR-associated endonuclease Cas1 family. In terms of assembly, homodimer, forms a heterotetramer with a Cas2 homodimer. The cofactor is Mg(2+). Requires Mn(2+) as cofactor.

CRISPR (clustered regularly interspaced short palindromic repeat), is an adaptive immune system that provides protection against mobile genetic elements (viruses, transposable elements and conjugative plasmids). CRISPR clusters contain spacers, sequences complementary to antecedent mobile elements, and target invading nucleic acids. CRISPR clusters are transcribed and processed into CRISPR RNA (crRNA). Acts as a dsDNA endonuclease. Involved in the integration of spacer DNA into the CRISPR cassette. The type III-A Csm effector complex binds crRNA and acts as a crRNA-guided RNase, DNase and cyclic oligoadenylate synthase; binding of target RNA cognate to the crRNA is required for all activities. This Mycobacterium tuberculosis (strain CDC 1551 / Oshkosh) protein is CRISPR-associated endonuclease Cas1.